We begin with the raw amino-acid sequence, 245 residues long: uncharacterized protein (245 aa).

This is an uncharacterized protein from Frog virus 3 (isolate Goorha) (FV-3).